Here is a 136-residue protein sequence, read N- to C-terminus: Sec-independent protein translocase protein TatB (136 aa).

A helical membrane pass occupies residues M1–G21. The disordered stretch occupies residues Y89 to S136. The span at T99 to P115 shows a compositional bias: polar residues. Positions S122–S136 are enriched in basic and acidic residues.

This sequence belongs to the TatB family. The Tat system comprises two distinct complexes: a TatABC complex, containing multiple copies of TatA, TatB and TatC subunits, and a separate TatA complex, containing only TatA subunits. Substrates initially bind to the TatABC complex, which probably triggers association of the separate TatA complex to form the active translocon.

Its subcellular location is the cell inner membrane. Functionally, part of the twin-arginine translocation (Tat) system that transports large folded proteins containing a characteristic twin-arginine motif in their signal peptide across membranes. Together with TatC, TatB is part of a receptor directly interacting with Tat signal peptides. TatB may form an oligomeric binding site that transiently accommodates folded Tat precursor proteins before their translocation. The sequence is that of Sec-independent protein translocase protein TatB from Hahella chejuensis (strain KCTC 2396).